A 406-amino-acid polypeptide reads, in one-letter code: Putative gustatory receptor 59f (406 aa).

The Cytoplasmic segment spans residues 1–36 (MRSSATKGAKLKNSPRERLSSFNPQYAERYKELYRT). A helical transmembrane segment spans residues 37–57 (LFWLLLISVLANTAPITILPG). Residues 58–69 (CPNRFYRLVHLS) are Extracellular-facing. A helical transmembrane segment spans residues 70–90 (WMILWYGLFVLGSYWEFVLVT). Over 91 to 99 (TQRVSLDRY) the chain is Cytoplasmic. Residues 100–120 (LNAIESAIYVVHIFSIMLLTW) form a helical membrane-spanning segment. Over 121–154 (QCRNWAPKLMTNIVTSDLNRAYTIDCNRTKRFIR) the chain is Extracellular. An N-linked (GlcNAc...) asparagine glycan is attached at Asn-147. The helical transmembrane segment at 155 to 175 (LQLFLVGIFACLAIFFNIWTH) threads the bilayer. Topologically, residues 176–189 (KFVVYRSILSINSY) are cytoplasmic. Residues 190 to 210 (VMPNIISSISFAQYYLLLQGI) traverse the membrane as a helical segment. Residues 211–259 (AWRQRRLTEGLERELTHLHSPRISEVQKIRMHHANLIDFTKAVNRTFQY) are Extracellular-facing. Residue Asn-254 is glycosylated (N-linked (GlcNAc...) asparagine). A helical membrane pass occupies residues 260–280 (SILLLFVGCFLNFNLVLFLVY). At 281 to 364 (QGIENPSMAD…RQHVVCGVIN (84 aa)) the chain is on the cytoplasmic side. The helical transmembrane segment at 365-385 (LDLKFLTTLLVASADFFIFLL) threads the bilayer. Residues 386–406 (QYDVTYEALSKSVQGNVTRYK) lie on the Extracellular side of the membrane. Asn-401 carries an N-linked (GlcNAc...) asparagine glycan.

It belongs to the insect chemoreceptor superfamily. Gustatory receptor (GR) family. Gr10a subfamily. In terms of tissue distribution, expressed in the adult abdomen and wing. In larvae, is expressed in neurons of the terminal external chemosensory organ.

Its subcellular location is the cell membrane. In terms of biological role, probable gustatory receptor which mediates acceptance or avoidance behavior, depending on its substrates. This chain is Putative gustatory receptor 59f (Gr59f), found in Drosophila melanogaster (Fruit fly).